The sequence spans 337 residues: Junctional sarcoplasmic reticulum protein 1 (337 aa).

The interval 1–84 (MATRAMEELD…EKEPVSKVTS (84 aa)) is mediates interaction with CACNA1S. Disordered regions lie at residues 23–125 (SALA…ELPW) and 159–337 (EAPA…KGRD). Composition is skewed to basic and acidic residues over residues 49–59 (SRSHDSQERVT) and 69–79 (TKPKKMEKEPV). Positions 165–180 (PESWASSSSSPKGPAS) are enriched in low complexity. The segment covering 199-213 (SKLEERVQIPRSEEA) has biased composition (basic and acidic residues). Over residues 214-225 (AEKDEWESEEAA) the composition is skewed to acidic residues. Basic and acidic residues-rich tracts occupy residues 236 to 277 (GPKE…RGAR), 285 to 309 (RRWE…DRKR), and 316 to 325 (RRPDEEDRPL). Residues 326–337 (GRQKRRAGKGRD) are compositionally biased toward basic residues.

In terms of assembly, interacts with CACNA1S, CACNB1 and calsequestrin.

It localises to the sarcoplasmic reticulum membrane. It is found in the endoplasmic reticulum membrane. Functionally, involved in skeletal muscle excitation/contraction coupling (EC), probably acting as a regulator of the voltage-sensitive calcium channel CACNA1S. EC is a physiological process whereby an electrical signal (depolarization of the plasma membrane) is converted into a chemical signal, a calcium gradient, by the opening of ryanodine receptor calcium release channels. May regulate CACNA1S membrane targeting and activity. In Bos taurus (Bovine), this protein is Junctional sarcoplasmic reticulum protein 1 (JSRP1).